The primary structure comprises 303 residues: MTSPNESRAFNAADDLIGDGSVERAGLHRATSVPGESSEGLQRGHSPEPNDSPPWQRGSARASQSGYRPSDPLTTTRQSNPAPGANVRSNRFISGMTAPALSGQLPKKNNSTQALEPVLMSNEVPFTESYASELPDLSGPVQRTVPCKPSPDRGSSTPRMGRLEITKVRGTGEIRSQISRRSHGPVRASMQIRRIDPWSMLKVSLLLSVALFFVWMIAVAFLYLLLGGMGVWAKLNSNVGDLLNNTGGNSGELVSNSTIFGCAVLVGLVNIVLMTTMAAIAAFVYNLSSDLVGGVEVTLADLD.

Disordered regions lie at residues 1–89 (MTSP…NVRS) and 132–159 (SELP…STPR). Residues 61-89 (RASQSGYRPSDPLTTTRQSNPAPGANVRS) are compositionally biased toward polar residues. Transmembrane regions (helical) follow at residues 205–225 (LLLS…LYLL) and 264–284 (VLVG…AAFV).

The protein to M.tuberculosis Rv0007.

The protein resides in the cell membrane. This is an uncharacterized protein from Mycobacterium leprae (strain TN).